Here is a 270-residue protein sequence, read N- to C-terminus: Phosphonates import ATP-binding protein PhnC 2 (270 aa).

The region spanning 2–245 (LVVEGLTCRF…IARELYDLEA (244 aa)) is the ABC transporter domain. 34–41 (GRSGAGKS) contributes to the ATP binding site.

This sequence belongs to the ABC transporter superfamily. Phosphonates importer (TC 3.A.1.9.1) family. In terms of assembly, the complex is composed of two ATP-binding proteins (PhnC), two transmembrane proteins (PhnE) and a solute-binding protein (PhnD).

It is found in the cell inner membrane. It carries out the reaction phosphonate(out) + ATP + H2O = phosphonate(in) + ADP + phosphate + H(+). In terms of biological role, part of the ABC transporter complex PhnCDE involved in phosphonates import. Responsible for energy coupling to the transport system. In Rhodopseudomonas palustris (strain BisA53), this protein is Phosphonates import ATP-binding protein PhnC 2.